The sequence spans 503 residues: Protein DETOXIFICATION 36 (503 aa).

The next 12 helical transmembrane spans lie at 54–74, 87–107, 137–157, 166–186, 203–223, 225–245, 271–293, 313–333, 355–375, 399–419, 427–447, and 456–476; these read LFHL…MSML, LAAA…LMLG, IVLV…KPLL, VASV…AYAV, SAYI…LSVF, FGWG…IIVL, GLWD…SWYS, LAIC…FNAA, AVTT…ILSW, FLAI…VAVG, AYVN…VLGF, and IWTG…IVTF.

This sequence belongs to the multi antimicrobial extrusion (MATE) (TC 2.A.66.1) family.

It is found in the membrane. The chain is Protein DETOXIFICATION 36 from Arabidopsis thaliana (Mouse-ear cress).